The primary structure comprises 360 residues: Hydroxycarboxylic acid receptor 2 (360 aa).

The Extracellular portion of the chain corresponds to 1 to 30 (MSKQNHFLVINGKNCCVFRDENIAKVLPPV). A helical membrane pass occupies residues 31-51 (LGLEFVFGLLGNGLALWIFCF). Residues 52-60 (HLKSWKSSR) lie on the Cytoplasmic side of the membrane. The helical transmembrane segment at 61–81 (IFLFNLAVADFLLIICLPFLT) threads the bilayer. Topologically, residues 82–98 (DNYVQNWDWRFGSIPCR) are extracellular. Cys-97 and Cys-174 form a disulfide bridge. A helical membrane pass occupies residues 99-119 (VMLFMLAMNRQGSIIFLTVVA). Topologically, residues 120-140 (VDRYFRVVHPHHFLNKISNRT) are cytoplasmic. Residues 141–161 (AAIISCFLWGITIGLTVHLLY) traverse the membrane as a helical segment. Over 162-189 (TDMMTRNGDANLCSSFSICYTFRWHDAM) the chain is Extracellular. A helical transmembrane segment spans residues 190 to 210 (FLLEFFLPLGIILFCSGRIIW). Residues 211–226 (SLRQRQMDRHVKIKRA) lie on the Cytoplasmic side of the membrane. The helical transmembrane segment at 227–247 (INFIMVVAIVFVICFLPSVAV) threads the bilayer. Residues 248-270 (RIRIFWLLYKHNVRNCDIYSSVD) lie on the Extracellular side of the membrane. Residues 271-291 (LAFFTTLSFTYMNSMLDPVVY) traverse the membrane as a helical segment. The Cytoplasmic segment spans residues 292–360 (YFSSPSFPNF…SPPYLASTSR (69 aa)). The disordered stretch occupies residues 320–360 (NNRSTSVELTGDPSTIRSIPGALMTDPSEPGSPPYLASTSR). Positions 321-336 (NRSTSVELTGDPSTIR) are enriched in polar residues. Ser-325 is modified (phosphoserine).

It belongs to the G-protein coupled receptor 1 family. Expressed in adipose tissue, lung and spleen.

Its subcellular location is the cell membrane. Its function is as follows. Acts as a high affinity receptor for both nicotinic acid (also known as niacin) and (D)-beta-hydroxybutyrate and mediates increased adiponectin secretion and decreased lipolysis through G(i)-protein-mediated inhibition of adenylyl cyclase. This pharmacological effect requires nicotinic acid doses that are much higher than those provided by a normal diet. Mediates nicotinic acid-induced apoptosis in mature neutrophils. Receptor activation by nicotinic acid results in reduced cAMP levels which may affect activity of cAMP-dependent protein kinase A and phosphorylation of target proteins, leading to neutrophil apoptosis. The rank order of potency for the displacement of nicotinic acid binding is 5-methyl pyrazole-3-carboxylic acid = pyridine-3-acetic acid &gt; acifran &gt; 5-methyl nicotinic acid = acipimox &gt;&gt; nicotinuric acid = nicotinamide. The sequence is that of Hydroxycarboxylic acid receptor 2 (Hcar2) from Rattus norvegicus (Rat).